The sequence spans 268 residues: Cytochrome b-c1 complex subunit Rieske-3, mitochondrial (268 aa).

Residues 1 to 56 constitute a mitochondrion transit peptide; the sequence is MLRIAGRKLSSSAATRSSSAFFTRNPFTFTDDSSSPARSPSPASLASQFLDQFRGF. Residues 57 to 105 lie on the Mitochondrial matrix side of the membrane; that stretch reads SSNSVSPAHQTGLVSDLPATVAAIKNPSSKIVYDDSNHERYPPGDPSKR. Residues 106–128 form a helical membrane-spanning segment; that stretch reads AFAYFVLTGGRFVYASLVRLLIL. The Mitochondrial intermembrane segment spans residues 129 to 268; the sequence is KFVLSMSASK…FMEENKLLIG (140 aa). The Rieske domain occupies 178-266; that stretch reads INLANSVDLG…YSFMEENKLL (89 aa). Residues C211, H213, C230, and H233 each coordinate [2Fe-2S] cluster. C216 and C232 form a disulfide bridge.

It belongs to the Rieske iron-sulfur protein family. As to quaternary structure, component of the ubiquinol-cytochrome c oxidoreductase (cytochrome b-c1 complex, complex III, CIII), a multisubunit enzyme composed of 3 respiratory subunits cytochrome b, cytochrome c1 and Rieske protein, 2 core protein subunits, and several low-molecular weight protein subunits. The complex exists as an obligatory dimer and forms supercomplexes (SCs) in the inner mitochondrial membrane with cytochrome c oxidase (complex IV, CIV). [2Fe-2S] cluster serves as cofactor. High levels are seen in the flowers while a low level expression is seen in the roots, leaves and stems.

It localises to the mitochondrion inner membrane. It carries out the reaction a quinol + 2 Fe(III)-[cytochrome c](out) = a quinone + 2 Fe(II)-[cytochrome c](out) + 2 H(+)(out). Component of the ubiquinol-cytochrome c oxidoreductase, a multisubunit transmembrane complex that is part of the mitochondrial electron transport chain which drives oxidative phosphorylation. The respiratory chain contains 3 multisubunit complexes succinate dehydrogenase (complex II, CII), ubiquinol-cytochrome c oxidoreductase (cytochrome b-c1 complex, complex III, CIII) and cytochrome c oxidase (complex IV, CIV), that cooperate to transfer electrons derived from NADH and succinate to molecular oxygen, creating an electrochemical gradient over the inner membrane that drives transmembrane transport and the ATP synthase. The cytochrome b-c1 complex catalyzes electron transfer from ubiquinol to cytochrome c, linking this redox reaction to translocation of protons across the mitochondrial inner membrane, with protons being carried across the membrane as hydrogens on the quinol. In the process called Q cycle, 2 protons are consumed from the matrix, 4 protons are released into the intermembrane space and 2 electrons are passed to cytochrome c. The Rieske protein is a catalytic core subunit containing a [2Fe-2S] iron-sulfur cluster. It cycles between 2 conformational states during catalysis to transfer electrons from the quinol bound in the Q(0) site in cytochrome b to cytochrome c1. This chain is Cytochrome b-c1 complex subunit Rieske-3, mitochondrial, found in Nicotiana tabacum (Common tobacco).